Reading from the N-terminus, the 346-residue chain is NADH-ubiquinone oxidoreductase chain 2 (346 aa).

10 helical membrane passes run 25–45 (NLLL…PLLA), 56–76 (ATKY…VIIL), 94–114 (LLNM…FHYW), 122–142 (IPLH…LSIL), 148–168 (LLNP…GAWG), 178–198 (IMAY…PYNP), 200–220 (LTLL…ITLM), 240–260 (ILTM…LTGF), 278–298 (LSTL…RLIY), and 325–345 (FILP…SQLI).

It belongs to the complex I subunit 2 family. Core subunit of respiratory chain NADH dehydrogenase (Complex I) which is composed of 45 different subunits. Interacts with TMEM242.

The protein resides in the mitochondrion inner membrane. The catalysed reaction is a ubiquinone + NADH + 5 H(+)(in) = a ubiquinol + NAD(+) + 4 H(+)(out). Its function is as follows. Core subunit of the mitochondrial membrane respiratory chain NADH dehydrogenase (Complex I) which catalyzes electron transfer from NADH through the respiratory chain, using ubiquinone as an electron acceptor. Essential for the catalytic activity and assembly of complex I. This is NADH-ubiquinone oxidoreductase chain 2 from Rattus norvegicus (Rat).